Reading from the N-terminus, the 351-residue chain is Porphobilinogen deaminase (351 aa).

At Cys-242 the chain carries S-(dipyrrolylmethanemethyl)cysteine.

The protein belongs to the HMBS family. As to quaternary structure, monomer. Dipyrromethane serves as cofactor.

It catalyses the reaction 4 porphobilinogen + H2O = hydroxymethylbilane + 4 NH4(+). The protein operates within porphyrin-containing compound metabolism; protoporphyrin-IX biosynthesis; coproporphyrinogen-III from 5-aminolevulinate: step 2/4. Functionally, tetrapolymerization of the monopyrrole PBG into the hydroxymethylbilane pre-uroporphyrinogen in several discrete steps. This is Porphobilinogen deaminase from Rickettsia rickettsii (strain Sheila Smith).